The chain runs to 105 residues: MPATVAELQAEIAAWIHPLNPDRRPGGTIAKLLEEIGELIASDRAHDPLEVADVLILALDLATLLGVDVTEAIRAKLAINRARSWARADNGAMRHIPGSDTPSFP.

The protein belongs to the Caudovirales dATP/dGTP diphosphohydrolase family. Co(2+) serves as cofactor.

The catalysed reaction is dGTP + H2O = dGMP + diphosphate + H(+). It carries out the reaction dATP + H2O = dAMP + diphosphate + H(+). Its pathway is purine metabolism. Its function is as follows. Catalyzes the hydrolysis of dGTP into dGMP, which is needed among other for the first step of biosynthesis of dZTP (2-amino-2'-deoxyadenosine-5'-triphosphate). This is dATP/dGTP diphosphohydrolase from Cyanophage S-2L (Cyanobacteria phage S-2L).